Consider the following 352-residue polypeptide: 4-hydroxy-3-methylbut-2-enyl diphosphate reductase (352 aa).

Cys36 is a binding site for [4Fe-4S] cluster. (2E)-4-hydroxy-3-methylbut-2-enyl diphosphate contacts are provided by His76 and His114. Dimethylallyl diphosphate contacts are provided by His76 and His114. 2 residues coordinate isopentenyl diphosphate: His76 and His114. [4Fe-4S] cluster is bound at residue Cys136. A (2E)-4-hydroxy-3-methylbut-2-enyl diphosphate-binding site is contributed by His164. Position 164 (His164) interacts with dimethylallyl diphosphate. His164 provides a ligand contact to isopentenyl diphosphate. The active-site Proton donor is Glu166. Thr204 lines the (2E)-4-hydroxy-3-methylbut-2-enyl diphosphate pocket. [4Fe-4S] cluster is bound at residue Cys234. Ser262, Ser263, Asn264, and Ser309 together coordinate (2E)-4-hydroxy-3-methylbut-2-enyl diphosphate. Dimethylallyl diphosphate-binding residues include Ser262, Ser263, Asn264, and Ser309. Isopentenyl diphosphate contacts are provided by Ser262, Ser263, Asn264, and Ser309.

Belongs to the IspH family. [4Fe-4S] cluster is required as a cofactor.

It carries out the reaction isopentenyl diphosphate + 2 oxidized [2Fe-2S]-[ferredoxin] + H2O = (2E)-4-hydroxy-3-methylbut-2-enyl diphosphate + 2 reduced [2Fe-2S]-[ferredoxin] + 2 H(+). It catalyses the reaction dimethylallyl diphosphate + 2 oxidized [2Fe-2S]-[ferredoxin] + H2O = (2E)-4-hydroxy-3-methylbut-2-enyl diphosphate + 2 reduced [2Fe-2S]-[ferredoxin] + 2 H(+). The protein operates within isoprenoid biosynthesis; dimethylallyl diphosphate biosynthesis; dimethylallyl diphosphate from (2E)-4-hydroxy-3-methylbutenyl diphosphate: step 1/1. It participates in isoprenoid biosynthesis; isopentenyl diphosphate biosynthesis via DXP pathway; isopentenyl diphosphate from 1-deoxy-D-xylulose 5-phosphate: step 6/6. Functionally, catalyzes the conversion of 1-hydroxy-2-methyl-2-(E)-butenyl 4-diphosphate (HMBPP) into a mixture of isopentenyl diphosphate (IPP) and dimethylallyl diphosphate (DMAPP). Acts in the terminal step of the DOXP/MEP pathway for isoprenoid precursor biosynthesis. This is 4-hydroxy-3-methylbut-2-enyl diphosphate reductase from Bifidobacterium longum (strain NCC 2705).